The sequence spans 206 residues: Small ribosomal subunit protein uS4 (206 aa).

The 66-residue stretch at 96 to 161 folds into the S4 RNA-binding domain; sequence RRLDNVVYRM…QGRIQAALAL (66 aa).

The protein belongs to the universal ribosomal protein uS4 family. As to quaternary structure, part of the 30S ribosomal subunit. Contacts protein S5. The interaction surface between S4 and S5 is involved in control of translational fidelity.

Functionally, one of the primary rRNA binding proteins, it binds directly to 16S rRNA where it nucleates assembly of the body of the 30S subunit. With S5 and S12 plays an important role in translational accuracy. This Legionella pneumophila (strain Corby) protein is Small ribosomal subunit protein uS4.